A 203-amino-acid polypeptide reads, in one-letter code: Glycerol-3-phosphate acyltransferase (203 aa).

5 helical membrane passes run 13 to 33 (TLACLVFGYLLGSIPFGLILT), 62 to 82 (LAAATLLFDALKGTAAAAIAS), 88 to 108 (AGIAAGFAAFLGHLFPVWLSF), 118 to 138 (IGVLLGLMPVMVLLFAAIWLA), and 159 to 179 (IALYAAGNGKVAGLFAVMTAI).

The protein belongs to the PlsY family. In terms of assembly, probably interacts with PlsX.

It is found in the cell inner membrane. It catalyses the reaction an acyl phosphate + sn-glycerol 3-phosphate = a 1-acyl-sn-glycero-3-phosphate + phosphate. Its pathway is lipid metabolism; phospholipid metabolism. In terms of biological role, catalyzes the transfer of an acyl group from acyl-phosphate (acyl-PO(4)) to glycerol-3-phosphate (G3P) to form lysophosphatidic acid (LPA). This enzyme utilizes acyl-phosphate as fatty acyl donor, but not acyl-CoA or acyl-ACP. The polypeptide is Glycerol-3-phosphate acyltransferase (Rhizobium meliloti (strain 1021) (Ensifer meliloti)).